Here is a 1008-residue protein sequence, read N- to C-terminus: Collagen, type I, alpha 1a (1008 aa).

Residues 1–21 (SPAMPVPGPMGPMGPRGPPGS) are compositionally biased toward pro residues. The segment at 1-920 (SPAMPVPGPM…PQEKAPDPFR (920 aa)) is disordered. Basic and acidic residues predominate over residues 39–53 (NGEDGESGKPGRGGE). The segment covering 92–117 (TPGAMGPRGAAGAAGARGNDGAAGAA) has biased composition (low complexity). Residues 119–132 (PPGPTGPAGPPGFP) show a composition bias toward pro residues. Gly residues predominate over residues 133-151 (GGPGAKGDAGAQGGRGPEG). Composition is skewed to low complexity over residues 152 to 195 (PAGA…AGAP) and 204 to 230 (SGPQGAAGAPGPKGEAGAKGEAGAPGV). Gly residues predominate over residues 253–265 (GARGGPGGRGFPG). Composition is skewed to low complexity over residues 339 to 354 (VGARGQPGVMGFPGPK) and 410 to 422 (LPGEAGATGPAGA). Basic and acidic residues predominate over residues 423–435 (RGDRGFPGERGAK). 3 stretches are compositionally biased toward low complexity: residues 437–456 (DAGAPGAPGAQGPPGLQGMP), 489–524 (RGLTGPLGLPGPAGATGDKGESGPAGAVGPAGARGA), and 537–573 (AGFAGPPGADGQPGAKGEAGDNGAKGDAGPPGAAGPT). The span at 604-617 (PPGPSGNPGPPGPA) shows a compositional bias: pro residues. A compositionally biased stretch (low complexity) spans 634-661 (PAGRPGELGAAGPPGPAGEKGSPGSEGA). The span at 696-709 (GEAGGPSGPGGERG) shows a compositional bias: gly residues. The span at 717–735 (PGLAGAPGEPGREGSPGNE) shows a compositional bias: low complexity. Over residues 761–771 (APGPPGAPGPV) the composition is skewed to pro residues. A compositionally biased stretch (low complexity) spans 785–806 (PAGPAGSAGPSGPRGPAGAPGL). Residues 807–821 (RGDKGESGEAGERRG) are compositionally biased toward basic and acidic residues. Residues 832–868 (SGSSGEQGPAGAAGPAGPRGPAGSAGSPGKDGMSGLP) are compositionally biased toward low complexity. Over residues 884–896 (AGPPGPPGPPGAP) the composition is skewed to pro residues. The Fibrillar collagen NC1 domain occupies 978-1008 (TSRLPLLDLAPMDVGAPDQEFGLEVGPVCFL).

The protein belongs to the fibrillar collagen family.

The protein resides in the secreted. The protein localises to the extracellular space. Its subcellular location is the extracellular matrix. The sequence is that of Collagen, type I, alpha 1a from Epinephelus aeneus (White grouper).